The sequence spans 246 residues: ATP synthase subunit a (246 aa).

A run of 5 helical transmembrane segments spans residues 34–54 (GQTM…TFIG), 92–112 (WVPL…LGQL), 130–150 (DINT…YAGL), 155–175 (FGYF…VLEF), and 196–216 (VVAV…MILF).

It belongs to the ATPase A chain family. F-type ATPases have 2 components, CF(1) - the catalytic core - and CF(0) - the membrane proton channel. CF(1) has five subunits: alpha(3), beta(3), gamma(1), delta(1), epsilon(1). CF(0) has four main subunits: a, b, b' and c.

The protein resides in the cell inner membrane. Its function is as follows. Key component of the proton channel; it plays a direct role in the translocation of protons across the membrane. The chain is ATP synthase subunit a from Gloeobacter violaceus (strain ATCC 29082 / PCC 7421).